We begin with the raw amino-acid sequence, 473 residues long: Photosystem II CP43 reaction center protein (473 aa).

The propeptide occupies methionine 1–glutamate 14. Threonine 15 carries the post-translational modification N-acetylthreonine. Threonine 15 bears the Phosphothreonine mark. The next 5 helical transmembrane spans lie at leucine 69–alanine 93, leucine 134–asparagine 155, lysine 178–threonine 200, lysine 255–serine 275, and tryptophan 291–alanine 312. [CaMn4O5] cluster is bound at residue glutamate 367. The chain crosses the membrane as a helical span at residues arginine 447–proline 471.

Belongs to the PsbB/PsbC family. PsbC subfamily. As to quaternary structure, PSII is composed of 1 copy each of membrane proteins PsbA, PsbB, PsbC, PsbD, PsbE, PsbF, PsbH, PsbI, PsbJ, PsbK, PsbL, PsbM, PsbT, PsbX, PsbY, PsbZ, Psb30/Ycf12, at least 3 peripheral proteins of the oxygen-evolving complex and a large number of cofactors. It forms dimeric complexes. Binds multiple chlorophylls and provides some of the ligands for the Ca-4Mn-5O cluster of the oxygen-evolving complex. It may also provide a ligand for a Cl- that is required for oxygen evolution. PSII binds additional chlorophylls, carotenoids and specific lipids. is required as a cofactor.

It localises to the plastid. The protein localises to the chloroplast thylakoid membrane. Its function is as follows. One of the components of the core complex of photosystem II (PSII). It binds chlorophyll and helps catalyze the primary light-induced photochemical processes of PSII. PSII is a light-driven water:plastoquinone oxidoreductase, using light energy to abstract electrons from H(2)O, generating O(2) and a proton gradient subsequently used for ATP formation. The polypeptide is Photosystem II CP43 reaction center protein (Mesostigma viride (Green alga)).